The following is a 292-amino-acid chain: 4-diphosphocytidyl-2-C-methyl-D-erythritol kinase (292 aa).

The active site involves K10. 100-110 (PIGSGLGGGSS) is a binding site for ATP. Residue D142 is part of the active site.

The protein belongs to the GHMP kinase family. IspE subfamily. Homodimer.

It catalyses the reaction 4-CDP-2-C-methyl-D-erythritol + ATP = 4-CDP-2-C-methyl-D-erythritol 2-phosphate + ADP + H(+). Its pathway is isoprenoid biosynthesis; isopentenyl diphosphate biosynthesis via DXP pathway; isopentenyl diphosphate from 1-deoxy-D-xylulose 5-phosphate: step 3/6. Catalyzes the phosphorylation of the position 2 hydroxy group of 4-diphosphocytidyl-2C-methyl-D-erythritol. The polypeptide is 4-diphosphocytidyl-2-C-methyl-D-erythritol kinase (Buchnera aphidicola subsp. Schizaphis graminum (strain Sg)).